The sequence spans 493 residues: Probable cytochrome P450 CYP36A1 (493 aa).

Helical transmembrane passes span 1-21 (MLFA…CRFA), 60-80 (GGIF…YDML), and 290-310 (QLIV…IIVL). Cys440 is a heme binding site.

It belongs to the cytochrome P450 family. Heme is required as a cofactor.

It is found in the membrane. In terms of biological role, cytochromes P450 are a group of heme-thiolate monooxygenases. They oxidize a variety of structurally unrelated compounds, including steroids, fatty acids, and xenobiotics. The protein is Probable cytochrome P450 CYP36A1 (cyp-36A1) of Caenorhabditis elegans.